We begin with the raw amino-acid sequence, 488 residues long: MENLTKHSIECSSFRGDWECKNQFERKQGSQEGHFSEMIFTPEDMPTFSIQHQRIHTDEKLLECKECGKDFSFVSVLVRHQRIHTGEKPYECKECGKAFGSGANLAYHQRIHTGEKPFECKECGKAFGSGSNLTHHQRIHTGEKPYECKECGKAFSFGSGLIRHQIIHSGEKPYECKECGKSFSFESALIRHHRIHTGEKPYECIDCGKAFGSGSNLTQHRRIHTGEKPYECKACGMAFSSGSALTRHQRIHTGEKPYICNECGKAFSFGSALTRHQRIHTGEKPYVCKECGKAFNSGSDLTQHQRIHTGEKPYECKECEKAFRSGSKLIQHQRMHTGEKPYECKECGKTFSSGSDLTQHHRIHTGEKPYECKECGKAFGSGSKLIQHQLIHTGERPYECKECGKSFSSGSALNRHQRIHTGEKPYECKECGKAFYSGSSLTQHQRIHTGEKLYECKNCGKAYGRDSEFQQHKKSHNGKKLCELETIN.

15 C2H2-type zinc fingers span residues 62–84 (LECK…QRIH), 90–112 (YECK…QRIH), 118–140 (FECK…QRIH), 146–168 (YECK…QIIH), 174–196 (YECK…HRIH), 202–224 (YECI…RRIH), 230–252 (YECK…QRIH), 258–280 (YICN…QRIH), 286–308 (YVCK…QRIH), 314–336 (YECK…QRMH), 342–364 (YECK…HRIH), 370–392 (YECK…QLIH), 398–420 (YECK…QRIH), 426–448 (YECK…QRIH), and 454–476 (YECK…KKSH).

It belongs to the krueppel C2H2-type zinc-finger protein family.

It localises to the nucleus. May be involved in transcriptional regulation. The protein is Zinc finger protein 345 (ZNF345) of Homo sapiens (Human).